The following is a 398-amino-acid chain: Secreted aspartic protease 2 (398 aa).

An N-terminal signal peptide occupies residues 1-18 (MFLKNIFIALAIALLVDA). Positions 19-56 (TPTTTKRSAGFVALDFSVVKTPKAFPVTNGQEGKTSKR) are cleaved as a propeptide — activation peptide. The Peptidase A1 domain occupies 70-384 (YAADITVGSN…DLDDNEISLA (315 aa)). Aspartate 88 is an active-site residue. 88–90 (DTG) serves as a coordination point for pepstatin A. Cysteine 103 and cysteine 115 are joined by a disulfide. 141–142 (GD) contributes to the pepstatin A binding site. Zn(2+) contacts are provided by aspartate 247 and aspartate 270. Aspartate 274 is an active-site residue. 274 to 278 (DSGTT) lines the pepstatin A pocket. An intrachain disulfide couples cysteine 312 to cysteine 350. N-linked (GlcNAc...) asparagine glycosylation is found at asparagine 313 and asparagine 321.

It belongs to the peptidase A1 family. In terms of assembly, monomer.

It is found in the secreted. It catalyses the reaction Preferential cleavage at the carboxyl of hydrophobic amino acids, but fails to cleave 15-Leu-|-Tyr-16, 16-Tyr-|-Leu-17 and 24-Phe-|-Phe-25 of insulin B chain. Activates trypsinogen, and degrades keratin.. Its function is as follows. Secreted aspartic peptidases (SAPs) are a group of ten acidic hydrolases considered as key virulence factors. These enzymes supply the fungus with nutrient amino acids as well as are able to degrade the selected host's proteins involved in the immune defense. Induces host inflammatory cytokine production in a proteolytic activity-independent way. Plays a role in tissue damage during superficial infection. Moreover, acts toward human hemoglobin though limited proteolysis to generate a variety of antimicrobial hemocidins, enabling to compete with the other microorganisms of the same physiological niche using the microbicidal peptides generated from the host protein. Plays a key role in defense against host by cleaving histatin-5 (Hst 5), a peptide from human saliva that carries out fungicidal activity. The cleavage rate decreases in an order of SAP2 &gt; SAP9 &gt; SAP3 &gt; SAP7 &gt; SAP4 &gt; SAP1 &gt; SAP8. The first cleavage occurs between residues 'Lys-17' and 'His-18' of Hst 5, giving DSHAKRHHGYKRKFHEK and HHSHRGY peptides. Simultaneously, the DSHAKRHHGYKRK peptide is also formed. Further fragmentation by SAP2 results in FHEK and DSHAKRHHGY products. The protein is Secreted aspartic protease 2 of Candida albicans (strain SC5314 / ATCC MYA-2876) (Yeast).